We begin with the raw amino-acid sequence, 977 residues long: Aspartate, glycine, lysine and serine-rich protein (977 aa).

The disordered stretch occupies residues 23–116; sequence GVLPDVDSGF…PITNLGSSTS (94 aa). Residues 37-50 are compositionally biased toward basic and acidic residues; that stretch reads EETKSEPKQPDTKP. The segment covering 51 to 63 has biased composition (polar residues); it reads EQPSVSKPDSSVN. N-linked (GlcNAc...) asparagine glycosylation is present at asparagine 136. Disordered stretches follow at residues 246 to 767 and 780 to 922; these read AGGG…TSRG and GGGK…GSGL. The span at 251 to 278 shows a compositional bias: low complexity; sequence YYSDSSDSSDSDSSGSDSSESGSSESGS. Over residues 309 to 325 the composition is skewed to polar residues; sequence NGSPDNGTPGSGSSRYT. Residues 410-427 are compositionally biased toward acidic residues; sequence LEDELLGSDSSDEDDIDD. Residues 428–443 show a composition bias toward gly residues; the sequence is GLGGLGLGAGPGGPGG. Basic residues-rich tracts occupy residues 447–457 and 465–540; these read TPKHKPRTDKK and KRKP…VQRK. Residues 541 to 557 show a composition bias toward basic and acidic residues; sequence QPREYKQESPEVEREHS. Over residues 572–583 the composition is skewed to low complexity; sequence KILITSLTSSRG. Over residues 591–643 the composition is skewed to gly residues; the sequence is DGSGSGNGGGDDGNGGGAGNGGGAGNGGGAGNGGGAGNGGGNGGGGNGGGGND. The segment covering 660–675 has biased composition (basic and acidic residues); sequence EHRNRCEDDDDYREKC. The span at 700–724 shows a compositional bias: low complexity; it reads SGSSSSSSATESESSSTSTTPSTSS. Polar residues-rich tracts occupy residues 730-744, 758-767, and 785-801; these read ILST…TRSG, SRPSVATSRG, and STGT…TSSA. Low complexity-rich tracts occupy residues 803 to 814, 822 to 857, and 870 to 907; these read GLDLSGLLGQLG, GPKP…GLLG, and KKPT…KLSP.

In terms of tissue distribution, component of the acid-insoluble and acid-soluble organic matrix of calcified layers of the shell (at protein level).

It is found in the secreted. In Lottia gigantea (Giant owl limpet), this protein is Aspartate, glycine, lysine and serine-rich protein.